The sequence spans 388 residues: P2X receptor E (388 aa).

Over Met1 to Gly28 the chain is Cytoplasmic. The helical transmembrane segment at Ile29 to Leu49 threads the bilayer. Topologically, residues Gln50–Met312 are lumenal. The segment at Arg291–Leu304 is pore-forming motif. The chain crosses the membrane as a helical span at residues Leu313–Ile333. The Cytoplasmic segment spans residues Ala334–Lys388. The tract at residues Phe349–Lys388 is disordered. Composition is skewed to polar residues over residues Gln350–His365 and Asn377–Lys388.

Belongs to the P2X receptor family.

The protein localises to the contractile vacuole membrane. In terms of biological role, P2X receptors are ATP-gated ion channels that play a role in intracellular calcium signaling. Not required for the purinergic response to extracellular nucleotides. Not essential for osmoregulation. Inward currents evoked by intracellular ATP. ATP analog beta, gamma-imido-ATP is a weak partial agonist of p2xE. Exclusively selective for ATP over other nucleotides. Insensitive to copper and P2 receptor antagonists PPADS and suramin but strongly inhibited by sodium ions. More permeable to ammonium than either sodium or potassium ions and less permeable to choline. Permeable to calcium ions, but not chloride. In Dictyostelium discoideum (Social amoeba), this protein is P2X receptor E (p2xE).